A 403-amino-acid chain; its full sequence is Octaketide synthase 2 (403 aa).

Cys174 is a catalytic residue. Residues Ser281 and 318-321 (GGRA) each bind CoA.

Belongs to the thiolase-like superfamily. Chalcone/stilbene synthases family. As to quaternary structure, homodimer.

The protein operates within secondary metabolite biosynthesis; flavonoid biosynthesis. Catalyzes the iterative condensations of 8 molecules of malonyl-CoA to produce aromatic octaketides, SEK4 and SEK4b, the products of the minimal polyketide synthase for the benzoisochromanequinone actinorhodin. May be involved in the biosynthesis of the octaketide barbaloin. The polypeptide is Octaketide synthase 2 (PKS4) (Aloe arborescens (Kidachi aloe)).